We begin with the raw amino-acid sequence, 333 residues long: Glycerol-3-phosphate dehydrogenase [NAD(P)+] (333 aa).

Positions 13, 14, 34, and 108 each coordinate NADPH. The sn-glycerol 3-phosphate site is built by K108, G137, and S139. A141 provides a ligand contact to NADPH. 5 residues coordinate sn-glycerol 3-phosphate: K192, D245, S255, R256, and N257. Residue K192 is the Proton acceptor of the active site. NADPH is bound at residue R256. Residue E282 participates in NADPH binding.

This sequence belongs to the NAD-dependent glycerol-3-phosphate dehydrogenase family.

The protein resides in the cytoplasm. The catalysed reaction is sn-glycerol 3-phosphate + NAD(+) = dihydroxyacetone phosphate + NADH + H(+). It carries out the reaction sn-glycerol 3-phosphate + NADP(+) = dihydroxyacetone phosphate + NADPH + H(+). Its pathway is membrane lipid metabolism; glycerophospholipid metabolism. Functionally, catalyzes the reduction of the glycolytic intermediate dihydroxyacetone phosphate (DHAP) to sn-glycerol 3-phosphate (G3P), the key precursor for phospholipid synthesis. The sequence is that of Glycerol-3-phosphate dehydrogenase [NAD(P)+] from Thioalkalivibrio sulfidiphilus (strain HL-EbGR7).